The chain runs to 490 residues: Proline--tRNA ligase (490 aa).

This sequence belongs to the class-II aminoacyl-tRNA synthetase family. ProS type 3 subfamily. Homodimer.

It localises to the cytoplasm. It carries out the reaction tRNA(Pro) + L-proline + ATP = L-prolyl-tRNA(Pro) + AMP + diphosphate. Functionally, catalyzes the attachment of proline to tRNA(Pro) in a two-step reaction: proline is first activated by ATP to form Pro-AMP and then transferred to the acceptor end of tRNA(Pro). In Salinibacter ruber (strain DSM 13855 / M31), this protein is Proline--tRNA ligase.